Reading from the N-terminus, the 288-residue chain is Protease HtpX (288 aa).

The next 2 helical transmembrane spans lie at 4–24 and 33–53; these read ILLF…ILTL and VGLL…SLLM. A Zn(2+)-binding site is contributed by His139. The active site involves Glu140. His143 lines the Zn(2+) pocket. The next 2 membrane-spanning stretches (helical) occupy residues 146–166 and 186–206; these read SGDM…VIFI and IYFM…SMIA. Glu214 provides a ligand contact to Zn(2+).

The protein belongs to the peptidase M48B family. The cofactor is Zn(2+).

The protein resides in the cell inner membrane. The protein is Protease HtpX of Histophilus somni (strain 2336) (Haemophilus somnus).